The chain runs to 143 residues: Large ribosomal subunit protein uL11 (143 aa).

It belongs to the universal ribosomal protein uL11 family. In terms of assembly, part of the ribosomal stalk of the 50S ribosomal subunit. Interacts with L10 and the large rRNA to form the base of the stalk. L10 forms an elongated spine to which L12 dimers bind in a sequential fashion forming a multimeric L10(L12)X complex. Post-translationally, one or more lysine residues are methylated.

In terms of biological role, forms part of the ribosomal stalk which helps the ribosome interact with GTP-bound translation factors. The protein is Large ribosomal subunit protein uL11 of Alkalilimnicola ehrlichii (strain ATCC BAA-1101 / DSM 17681 / MLHE-1).